We begin with the raw amino-acid sequence, 236 residues long: Probable glutathione S-transferase GSTU6 (236 aa).

The GST N-terminal domain occupies Gly-5 to Ala-84. Glutathione-binding positions include Ser-15, Lys-42, Val-56, and Glu-68–Ser-69. The 135-residue stretch at Asp-94 to Leu-228 folds into the GST C-terminal domain.

The protein belongs to the GST superfamily. Tau family. As to expression, expressed in seedling shoots and roots.

It catalyses the reaction RX + glutathione = an S-substituted glutathione + a halide anion + H(+). In terms of biological role, conjugation of reduced glutathione to a wide number of exogenous and endogenous hydrophobic electrophiles. This Oryza sativa subsp. japonica (Rice) protein is Probable glutathione S-transferase GSTU6 (GSTU6).